The sequence spans 380 residues: MAPNIRKSHPLLKIINNSLIDLPAPSNISAWWNFGSLLAVCLTTQILTGLLLAMHYTADTSLAFSSVAHTCRNVQYGWLIRNLHANGASFFFICIFLHIGRGLYYGSYLYKETWNTGVILLLTLMATAFVGYVLPWGQMSFWGATVITNLFSAIPYIGQTLVEWAWGGFSVDNPTLTRFFALHFLLPFVITGITITHLMFLHESGSNNPLGISSNSDKIPFHPYYSLKDILGLALMLTPFLTLALFSPNLLGDPENFTPANPLVTPPHIKPEWYFLFAYAILRSIPNKLGGVLALAASVLILLLIPFLHKSKQRTMTFRPLSQALFWLLVANLLILTWVGSQPVEHPFIIIGQMASLSYFTILLILFPAIGTLENKMLNY.

Transmembrane regions (helical) follow at residues 34–54 (FGSLLAVCLTTQILTGLLLAM), 78–99 (WLIRNLHANGASFFFICIFLHI), 114–134 (WNTGVILLLTLMATAFVGYVL), and 179–199 (FFALHFLLPFVITGITITHLM). Heme b is bound by residues histidine 84 and histidine 98. Heme b contacts are provided by histidine 183 and histidine 197. Histidine 202 is a binding site for a ubiquinone. Transmembrane regions (helical) follow at residues 227 to 247 (LKDILGLALMLTPFLTLALFS), 289 to 309 (LGGVLALAASVLILLLIPFLH), 321 to 341 (LSQALFWLLVANLLILTWVGS), and 348 to 368 (FIIIGQMASLSYFTILLILFP).

The protein belongs to the cytochrome b family. As to quaternary structure, the cytochrome bc1 complex contains 11 subunits: 3 respiratory subunits (MT-CYB, CYC1 and UQCRFS1), 2 core proteins (UQCRC1 and UQCRC2) and 6 low-molecular weight proteins (UQCRH/QCR6, UQCRB/QCR7, UQCRQ/QCR8, UQCR10/QCR9, UQCR11/QCR10 and a cleavage product of UQCRFS1). This cytochrome bc1 complex then forms a dimer. Heme b serves as cofactor.

It localises to the mitochondrion inner membrane. Component of the ubiquinol-cytochrome c reductase complex (complex III or cytochrome b-c1 complex) that is part of the mitochondrial respiratory chain. The b-c1 complex mediates electron transfer from ubiquinol to cytochrome c. Contributes to the generation of a proton gradient across the mitochondrial membrane that is then used for ATP synthesis. This Syrmaticus reevesii (Reeves's pheasant) protein is Cytochrome b (MT-CYB).